A 236-amino-acid chain; its full sequence is MSKTSKAYRAAAEKIDAGRLYTPLAAAKAVKETSSKNFDATVDVAIRLGVDPRKADQLVRGTVSLPNGTGKEVRVVVFAEGPNATAAEEAGADVVGTAELIEKIQGGWTDFDAAIATPDQMAKVGRVARVLGPRGLMPNPKTGTVTTDVAKAVAEIKGGKISFRVDKAANLHAILGKASFTEKQLAENYGALIDELLRLKPSSSKGRYFKKVTMSSTNGPGVPVDNTIVKDFTEEA.

It belongs to the universal ribosomal protein uL1 family. Part of the 50S ribosomal subunit.

Binds directly to 23S rRNA. The L1 stalk is quite mobile in the ribosome, and is involved in E site tRNA release. Its function is as follows. Protein L1 is also a translational repressor protein, it controls the translation of the L11 operon by binding to its mRNA. The chain is Large ribosomal subunit protein uL1 from Corynebacterium jeikeium (strain K411).